The chain runs to 314 residues: Methenyltetrahydromethanopterin cyclohydrolase (314 aa).

It belongs to the MCH family.

The protein resides in the cytoplasm. The enzyme catalyses 5,10-methenyl-5,6,7,8-tetrahydromethanopterin + H2O = N(5)-formyl-5,6,7,8-tetrahydromethanopterin + H(+). It participates in one-carbon metabolism; methanogenesis from CO(2); 5,10-methenyl-5,6,7,8-tetrahydromethanopterin from CO(2): step 3/3. In terms of biological role, catalyzes the reversible interconversion of 5-formyl-H(4)MPT to methenyl-H(4)MPT(+). This chain is Methenyltetrahydromethanopterin cyclohydrolase, found in Methanoregula boonei (strain DSM 21154 / JCM 14090 / 6A8).